The chain runs to 235 residues: MTTYIAYGNINQPFSLESLPDELIPENLYQIETDSSRVFQRHQCRRLAHLLLFQLLKIAGKSTALLSQIHRTESGRPYFLDERIDFNISHSGDWVAVILDIRNEEKSAVGIDIEFPKIRNFTALMEHIAPKEEIDWFHHQQDSLNAFYRCWCLREAVLKSQGFGIVKLSNVRHFPEQQKIFSDYCPQGQLWFTDELPIYLAAFVNHQEKLPHFYEWNRESLQIKELEKYVLYEVN.

Mg(2+) contacts are provided by Asp-112, Glu-114, and Glu-155.

It belongs to the P-Pant transferase superfamily. Gsp/Sfp/HetI/AcpT family. Mg(2+) serves as cofactor.

May transfer the 4'-phosphopantetheine moiety from coenzyme A (CoA) to a serine residue of a carrier protein domain. The sequence is that of Putative 4'-phosphopantetheinyl transferase HI_0152 from Haemophilus influenzae (strain ATCC 51907 / DSM 11121 / KW20 / Rd).